A 305-amino-acid chain; its full sequence is tRNA pseudouridine synthase B (305 aa).

Asp50 acts as the Nucleophile in catalysis.

Belongs to the pseudouridine synthase TruB family. Type 1 subfamily.

It carries out the reaction uridine(55) in tRNA = pseudouridine(55) in tRNA. Responsible for synthesis of pseudouridine from uracil-55 in the psi GC loop of transfer RNAs. This chain is tRNA pseudouridine synthase B, found in Rhodococcus jostii (strain RHA1).